The following is a 452-amino-acid chain: tRNA modification GTPase MnmE (452 aa).

(6S)-5-formyl-5,6,7,8-tetrahydrofolate-binding residues include Arg-22, Glu-79, and Lys-119. Residues 215 to 375 (GMKVVIAGRP…LRQHLKQSMG (161 aa)) form the TrmE-type G domain. Asn-225 is a binding site for K(+). GTP contacts are provided by residues 225-230 (NAGKSS), 244-250 (TDIAGTT), 269-272 (DTAG), and 333-336 (NKAD). Ser-229 contacts Mg(2+). Positions 244, 246, and 249 each coordinate K(+). Thr-250 provides a ligand contact to Mg(2+). Position 452 (Lys-452) interacts with (6S)-5-formyl-5,6,7,8-tetrahydrofolate.

Belongs to the TRAFAC class TrmE-Era-EngA-EngB-Septin-like GTPase superfamily. TrmE GTPase family. Homodimer. Heterotetramer of two MnmE and two MnmG subunits. K(+) serves as cofactor.

The protein resides in the cytoplasm. Functionally, exhibits a very high intrinsic GTPase hydrolysis rate. Involved in the addition of a carboxymethylaminomethyl (cmnm) group at the wobble position (U34) of certain tRNAs, forming tRNA-cmnm(5)s(2)U34. This is tRNA modification GTPase MnmE from Histophilus somni (strain 129Pt) (Haemophilus somnus).